The following is a 407-amino-acid chain: Phosphopentomutase (407 aa).

The Mn(2+) site is built by D10, D306, H311, D347, H348, and H359.

Belongs to the phosphopentomutase family. It depends on Mn(2+) as a cofactor.

Its subcellular location is the cytoplasm. It catalyses the reaction 2-deoxy-alpha-D-ribose 1-phosphate = 2-deoxy-D-ribose 5-phosphate. The enzyme catalyses alpha-D-ribose 1-phosphate = D-ribose 5-phosphate. The protein operates within carbohydrate degradation; 2-deoxy-D-ribose 1-phosphate degradation; D-glyceraldehyde 3-phosphate and acetaldehyde from 2-deoxy-alpha-D-ribose 1-phosphate: step 1/2. Its function is as follows. Isomerase that catalyzes the conversion of deoxy-ribose 1-phosphate (dRib-1-P) and ribose 1-phosphate (Rib-1-P) to deoxy-ribose 5-phosphate (dRib-5-P) and ribose 5-phosphate (Rib-5-P), respectively. This is Phosphopentomutase from Salmonella dublin (strain CT_02021853).